The primary structure comprises 136 residues: Large ribosomal subunit protein uL16 (136 aa).

It belongs to the universal ribosomal protein uL16 family. As to quaternary structure, part of the 50S ribosomal subunit.

Functionally, binds 23S rRNA and is also seen to make contacts with the A and possibly P site tRNAs. This chain is Large ribosomal subunit protein uL16, found in Orientia tsutsugamushi (strain Boryong) (Rickettsia tsutsugamushi).